The primary structure comprises 346 residues: Nitrilase 1 (346 aa).

Ser2 is subject to N-acetylserine. The CN hydrolase domain occupies 25–297 (VRVTIVQSST…EGLVTADIDL (273 aa)). Glu65 functions as the Proton acceptor in the catalytic mechanism. Residue Lys152 is the Proton donor of the active site. Residue Cys186 is the Nucleophile of the active site.

This sequence belongs to the carbon-nitrogen hydrolase superfamily. Nitrilase family. In terms of assembly, interacts with DEK3. Expressed in cotyledons, hypocotyls, leaves, roots, stems, flowers and siliques.

It carries out the reaction a nitrile + 2 H2O = a carboxylate + NH4(+). Can convert indole-3-acetonitrile to the plant hormone indole-3-acetic acid. This Arabidopsis thaliana (Mouse-ear cress) protein is Nitrilase 1.